The following is a 246-amino-acid chain: MSKQKDKERIHEKRRAKFQELQNKIGITFRNEKLLIQAFTHSSYVNEHRRRLHEDNERLEFLGDAVLELTVSQYLFQKFPHMSEGQLTKLRAAIVCEPSLVKFANALSFGELVLLGKGEELTGGRTRPALLADVFEAFIGALYLDQGMDAVIRFLEKTMFPKIDEGAFSHVMDFKSQLQELVQRDGSGTLEYAILEEKGPAHNKEFVARVALNGQELGIGVGRSKKEAEQHAAQMALETLRAADQQ.

Positions 18–147 constitute an RNase III domain; sequence FQELQNKIGI…FIGALYLDQG (130 aa). Mg(2+) is bound at residue E60. D64 is an active-site residue. Mg(2+) contacts are provided by D133 and E136. E136 is a catalytic residue. In terms of domain architecture, DRBM spans 173–242; that stretch reads DFKSQLQELV…AQMALETLRA (70 aa).

This sequence belongs to the ribonuclease III family. Homodimer. It depends on Mg(2+) as a cofactor.

Its subcellular location is the cytoplasm. The catalysed reaction is Endonucleolytic cleavage to 5'-phosphomonoester.. Functionally, digests double-stranded RNA. Involved in the processing of primary rRNA transcript to yield the immediate precursors to the large and small rRNAs (23S and 16S). Processes some mRNAs, and tRNAs when they are encoded in the rRNA operon. Processes pre-crRNA and tracrRNA of type II CRISPR loci if present in the organism. The chain is Ribonuclease 3 from Geobacillus kaustophilus (strain HTA426).